Reading from the N-terminus, the 265-residue chain is MNFLVSILLGIIQGISEWLPISSKTQELIASHYLLSLDVSIAYTFGLFMEMGSIGSALIYFRQDVKRVFHDKFLLKFLVVVTALTGIVGVPLYVISDKLLQNAYNPSIPMIFLGIALIADGIYIRYSRSRTREFKNLSTKEMILIGIAQGIAALPGVSRSGMTVSTMLVLGINPEDAFHYSYLAYIPAAIGSVGTTLLFTRHHISYVVSLIGIDGIALAVISALLTGLVVIGFLLKIAKTKKVYLIDFMLGGIAVLVSMLGLIIS.

7 helical membrane-spanning segments follow: residues 41 to 61 (IAYT…LIYF), 75 to 95 (LKFL…LYVI), 104 to 124 (YNPS…GIYI), 137 to 157 (LSTK…LPGV), 180 to 200 (YSYL…LLFT), 215 to 235 (GIAL…GFLL), and 244 to 264 (YLID…GLII).

Belongs to the UppP family.

Its subcellular location is the cell membrane. It catalyses the reaction di-trans,octa-cis-undecaprenyl diphosphate + H2O = di-trans,octa-cis-undecaprenyl phosphate + phosphate + H(+). Catalyzes the dephosphorylation of undecaprenyl diphosphate (UPP). This is Undecaprenyl-diphosphatase from Saccharolobus islandicus (strain Y.G.57.14 / Yellowstone #1) (Sulfolobus islandicus).